Reading from the N-terminus, the 254-residue chain is tRNA pseudouridine synthase A (254 aa).

D52 functions as the Nucleophile in the catalytic mechanism. Y111 lines the substrate pocket.

Belongs to the tRNA pseudouridine synthase TruA family. Homodimer.

It carries out the reaction uridine(38/39/40) in tRNA = pseudouridine(38/39/40) in tRNA. Formation of pseudouridine at positions 38, 39 and 40 in the anticodon stem and loop of transfer RNAs. This Rhizorhabdus wittichii (strain DSM 6014 / CCUG 31198 / JCM 15750 / NBRC 105917 / EY 4224 / RW1) (Sphingomonas wittichii) protein is tRNA pseudouridine synthase A.